Here is a 236-residue protein sequence, read N- to C-terminus: Ribonuclease HII (236 aa).

Residues 21–214 form the RNase H type-2 domain; that stretch reads RTVAGVDEVG…LDALPRWQHL (194 aa). Asp-27, Glu-28, and Asp-119 together coordinate a divalent metal cation.

The protein belongs to the RNase HII family. It depends on Mn(2+) as a cofactor. Mg(2+) is required as a cofactor.

It is found in the cytoplasm. It carries out the reaction Endonucleolytic cleavage to 5'-phosphomonoester.. In terms of biological role, endonuclease that specifically degrades the RNA of RNA-DNA hybrids. This chain is Ribonuclease HII, found in Streptomyces griseus subsp. griseus (strain JCM 4626 / CBS 651.72 / NBRC 13350 / KCC S-0626 / ISP 5235).